A 122-amino-acid polypeptide reads, in one-letter code: Large ribosomal subunit protein uL18 (122 aa).

The segment covering 1 to 11 (MLKKPDRNALR) has biased composition (basic and acidic residues). Residues 1–22 (MLKKPDRNALRDKRRRRVRKKI) form a disordered region. Basic residues predominate over residues 12–22 (DKRRRRVRKKI).

This sequence belongs to the universal ribosomal protein uL18 family. Part of the 50S ribosomal subunit; part of the 5S rRNA/L5/L18/L25 subcomplex. Contacts the 5S and 23S rRNAs.

This is one of the proteins that bind and probably mediate the attachment of the 5S RNA into the large ribosomal subunit, where it forms part of the central protuberance. This Pelotomaculum thermopropionicum (strain DSM 13744 / JCM 10971 / SI) protein is Large ribosomal subunit protein uL18.